Consider the following 800-residue polypeptide: U4/U6.U5 tri-snRNP-associated protein 1 (800 aa).

The tract at residues 1–120 (MGSSKKHRGE…SSGDASSLSI (120 aa)) is disordered. The span at 32-42 (HREHKKHKHRS) shows a compositional bias: basic residues. Residues 58 to 101 (ERGGERGSGRRGAEAEARSSTHGRERSQAEPSERRVKREKRDDG) are compositionally biased toward basic and acidic residues. Positions 104 to 119 (AAASSKTSSGDASSLS) are enriched in low complexity. Glycyl lysine isopeptide (Lys-Gly) (interchain with G-Cter in SUMO2) cross-links involve residues Lys125 and Lys133. Lys141 is covalently cross-linked (Glycyl lysine isopeptide (Lys-Gly) (interchain with G-Cter in SUMO1); alternate). Residue Lys141 forms a Glycyl lysine isopeptide (Lys-Gly) (interchain with G-Cter in SUMO2); alternate linkage. Glycyl lysine isopeptide (Lys-Gly) (interchain with G-Cter in SUMO2) cross-links involve residues Lys147 and Lys188. The stretch at 157 to 231 (NPMALRQREE…KLLEEMDQEF (75 aa)) forms a coiled coil. Residue Thr189 is modified to Phosphothreonine. Residue Lys277 forms a Glycyl lysine isopeptide (Lys-Gly) (interchain with G-Cter in SUMO2) linkage. Residues 311 to 330 (PDYLPYAEDESVDDLAQQKP) are disordered. Phosphoserine is present on Ser321. Glycyl lysine isopeptide (Lys-Gly) (interchain with G-Cter in SUMO2) cross-links involve residues Lys329 and Lys336. Residue Ser348 is modified to Phosphoserine. Thr392 is modified (phosphothreonine). Glycyl lysine isopeptide (Lys-Gly) (interchain with G-Cter in SUMO2) cross-links involve residues Lys400 and Lys414. Positions 419–497 (RADDLLPLGD…QVLEEDEAEL (79 aa)) are disordered. At Thr430 the chain carries Phosphothreonine. Ser448, Ser474, Ser486, and Ser521 each carry phosphoserine. The stretch at 490–533 (LEEDEAELELQKQLEKGRRLRQLQQLQQLRDSGEKVVEIVKKLE) forms a coiled coil. Lys548 participates in a covalent cross-link: Glycyl lysine isopeptide (Lys-Gly) (interchain with G-Cter in SUMO2). The segment at 571 to 604 (LAGNREEQEELMDFERDEERSANGGSESDGEENI) is disordered. Phosphoserine occurs at positions 591, 596, 598, and 621. Glycyl lysine isopeptide (Lys-Gly) (interchain with G-Cter in SUMO2) cross-links involve residues Lys648, Lys657, and Lys684. Thr695 carries the post-translational modification Phosphothreonine. Residues Lys699, Lys709, Lys723, Lys749, and Lys758 each participate in a glycyl lysine isopeptide (Lys-Gly) (interchain with G-Cter in SUMO2) cross-link. A Phosphoserine modification is found at Ser761. Phosphothreonine is present on Thr764. Residues Lys775 and Lys780 each participate in a glycyl lysine isopeptide (Lys-Gly) (interchain with G-Cter in SUMO2) cross-link. Residue Ser789 is modified to Phosphoserine. Lys791 is covalently cross-linked (Glycyl lysine isopeptide (Lys-Gly) (interchain with G-Cter in SUMO2)).

It belongs to the SNU66/SART1 family. In terms of assembly, identified in the spliceosome C complex. Component of the U4/U6-U5 tri-snRNP complex composed of the U4, U6 and U5 snRNAs and at least PRPF3, PRPF4, PRPF6, PRPF8, PRPF31, SNRNP200, TXNL4A, SNRNP40, DDX23, CD2BP2, PPIH, SNU13, EFTUD2, SART1 and USP39. Interacts with UBL5. Interacts with IVNS1ABP (via Kelch repeats). In terms of processing, sumoylated with SUMO2. As to expression, ubiquitously expressed.

It localises to the nucleus. In terms of biological role, plays a role in mRNA splicing as a component of the U4/U6-U5 tri-snRNP, one of the building blocks of the spliceosome. May also bind to DNA. This is U4/U6.U5 tri-snRNP-associated protein 1 (SART1) from Homo sapiens (Human).